A 147-amino-acid polypeptide reads, in one-letter code: Small ribosomal subunit protein uS5 (147 aa).

The S5 DRBM domain maps to 9–72 (FEEVIVDIGR…DDAFKNIIHV (64 aa)).

This sequence belongs to the universal ribosomal protein uS5 family. Part of the 30S ribosomal subunit. Contacts proteins S4 and S8.

Functionally, with S4 and S12 plays an important role in translational accuracy. In terms of biological role, located at the back of the 30S subunit body where it stabilizes the conformation of the head with respect to the body. The protein is Small ribosomal subunit protein uS5 of Campylobacter curvus (strain 525.92).